The following is a 1537-amino-acid chain: DNA excision repair protein ERCC-6-like 2 (1537 aa).

The region spanning Tyr134 to Gly319 is the Helicase ATP-binding domain. Asp147–Thr154 contributes to the ATP binding site. Residues Asp270–His273 carry the DEAH box motif. One can recognise a Helicase C-terminal domain in the interval Val510–Lys660. 2 disordered regions span residues Lys715–Thr735 and Ser749–Thr768. Basic and acidic residues predominate over residues Gly755–Asp764. The short motif at Pro772–Ser783 is the Atypical PIP-box element. Disordered stretches follow at residues Lys791–Pro811, Ser833–Asp891, and Glu918–Leu948. A compositionally biased stretch (basic and acidic residues) spans Glu834–Leu857. Phosphoserine is present on residues Ser968 and Ser971. Residues Val1274–Asp1306 are disordered. Residues Lys1276 to Leu1292 are compositionally biased toward basic and acidic residues. Polar residues predominate over residues Asn1295–Asp1306.

It belongs to the SNF2/RAD54 helicase family. In terms of assembly, interacts with NEK6. Interacts (via an atypical PIP-box) with PCNA; this interaction facilitates cenrtomeric localization of ERCC6L2. Interacts with CYREN; this interaction is DNA independent. Interacts with XRCC6 and XRCC5. Phosphorylated by NEK6.

The protein localises to the nucleus. The protein resides in the cytoplasm. It is found in the cytoskeleton. It localises to the microtubule organizing center. Its subcellular location is the centrosome. The protein localises to the mitochondrion. The protein resides in the chromosome. It is found in the centromere. Functionally, promotes double-strand break (DSB) end-joining and facilitates programmed recombination by controlling how DNA ends are joined in a spatially oriented manner during repair. Also plays a role in DNA repair by restricting DNA end resection in double strand break (DSB) repair. Facilitates replication of complex DNA regions and regulates the maintenance of chromatin structure. This chain is DNA excision repair protein ERCC-6-like 2, found in Mus musculus (Mouse).